The chain runs to 130 residues: ASCGSTTVTAKNLISLAKKQVDYILGENPAKMSYMVGFGERYPQHVHHRGSSLPSVHAHPNPIPCNAGFQYLYSSSPNPNILVGAILGGPDSRDSFSDDRNNYQQSEPATYINAPLVGALAFFAANPVAN.

Residues His47, Asp98, and Glu107 contribute to the active site.

Belongs to the glycosyl hydrolase 9 (cellulase E) family.

The catalysed reaction is Endohydrolysis of (1-&gt;4)-beta-D-glucosidic linkages in cellulose, lichenin and cereal beta-D-glucans.. Its function is as follows. Involved in ripening fruit process. This is Endoglucanase 2 (CEL2) from Persea americana (Avocado).